A 731-amino-acid polypeptide reads, in one-letter code: Zinc finger protein 615 (731 aa).

A KRAB domain is found at 8–79; that stretch reads LTLEDVAVDF…EDEIYSRICS (72 aa). 19 consecutive C2H2-type zinc fingers follow at residues 204-226, 232-254, 260-282, 288-310, 316-338, 344-366, 372-394, 400-422, 428-450, 456-478, 484-506, 512-534, 540-562, 568-590, 596-618, 624-646, 652-674, 680-702, and 708-730; these read HVCS…QRVH, HVCS…QRTH, YECT…QKTH, YTCS…QRTH, HGCS…QKTH, YICS…HRTH, FICN…QQTH, YKCN…QRTH, YVCT…QRTH, YICN…QRTH, YVCG…QRTH, YICN…RRTH, YVCS…QRTH, YICN…QQTH, YKCN…QRFH, FACT…QRIH, YKCS…QRKH, and YGCS…RRIH.

The protein belongs to the krueppel C2H2-type zinc-finger protein family.

It is found in the nucleus. In terms of biological role, may be involved in transcriptional regulation. This Homo sapiens (Human) protein is Zinc finger protein 615 (ZNF615).